The sequence spans 674 residues: UvrABC system protein B (674 aa).

The region spanning 26-414 (EGLDSGLAHQ…SGNDIAEQVV (389 aa)) is the Helicase ATP-binding domain. 39 to 46 (GVTGSGKT) lines the ATP pocket. The Beta-hairpin signature appears at 92 to 115 (YYDYYQPEAYVPTTDTFIEKDASV). A Helicase C-terminal domain is found at 432–586 (QVDDLLSEIR…ALHNKKNGIT (155 aa)). The 36-residue stretch at 634 to 669 (ELEIQRLETEMYDLAQNLEFEKAAEARDKIHTLRQQ) folds into the UVR domain.

The protein belongs to the UvrB family. Forms a heterotetramer with UvrA during the search for lesions. Interacts with UvrC in an incision complex.

The protein localises to the cytoplasm. The UvrABC repair system catalyzes the recognition and processing of DNA lesions. A damage recognition complex composed of 2 UvrA and 2 UvrB subunits scans DNA for abnormalities. Upon binding of the UvrA(2)B(2) complex to a putative damaged site, the DNA wraps around one UvrB monomer. DNA wrap is dependent on ATP binding by UvrB and probably causes local melting of the DNA helix, facilitating insertion of UvrB beta-hairpin between the DNA strands. Then UvrB probes one DNA strand for the presence of a lesion. If a lesion is found the UvrA subunits dissociate and the UvrB-DNA preincision complex is formed. This complex is subsequently bound by UvrC and the second UvrB is released. If no lesion is found, the DNA wraps around the other UvrB subunit that will check the other stand for damage. This chain is UvrABC system protein B, found in Photobacterium profundum (strain SS9).